The sequence spans 1338 residues: Centrosomal P4.1-associated protein (1338 aa).

2 disordered regions span residues 78 to 99 (QKLESNSPYKPQSDKSETHTGF) and 190 to 211 (GLSLLPDDQSQKHRSPGNTTTG). Phosphoserine occurs at positions 260 and 317. Positions 320–395 (VANIEERPIK…FTNAKSKFQK (76 aa)) are alpha/beta-tubulin binding. Disordered regions lie at residues 387–415 (TNAKSKFQKGKESKLVTNQSTSEDQPLFK), 437–480 (PILK…QTGK), and 522–552 (QGKDRLPLSTGPASRLAAKSPIRETMKESES). Residues 401–410 (LVTNQSTSED) show a composition bias toward polar residues. Ser541 carries the phosphoserine modification. The segment covering 542 to 551 (PIRETMKESE) has biased composition (basic and acidic residues). Residues Ser590 and Ser596 each carry the phosphoserine; by PLK2 modification. Disordered regions lie at residues 612–790 (HRMS…LSMS), 846–903 (VKRG…DNAR), and 1088–1158 (TQVE…HPDG). Over residues 636–651 (NRSEDLDHTAREKESE) the composition is skewed to basic and acidic residues. Polar residues predominate over residues 680 to 690 (QKSTSENQTEW). Basic and acidic residues predominate over residues 718–765 (STEDRERGISSREDSPQVCDDKGPFKDTRTQEDKRRDVDLDLSDKDYS). Phosphoserine is present on Ser760. The segment covering 781–790 (PSRSSSLSMS) has biased composition (low complexity). Residues 896 to 1338 (QPPGDNARSQ…EGNVLMDTEL (443 aa)) are interaction with STIL.

It belongs to the TCP10 family. In terms of assembly, forms homodimers. Associates with microtubules plus ends; binds to beta-tubulin subunits exposed on microtubule outer surface at its distal tip; also associates with microtubule lattice. Associated with the gamma-tubulin complex. Interacts with the head domain of EPB41. Interacts with LYST. Interacts with CEP152 (via C-terminus). Interacts with STIL. Forms a complex with STIL and SASS6. In terms of processing, phosphorylation at Ser-590 and Ser-596 by PLK2 is required for procentriole formation and centriole elongation. Phosphorylation by PLK2 oscillates during the cell cycle: it increases at G1/S transition and decreases during the exit from mitosis. Phosphorylation at Ser-596 is also mediated by PLK4 but is not a critical step in PLK4 function in procentriole assembly.

Its subcellular location is the cytoplasm. The protein localises to the cytoskeleton. The protein resides in the microtubule organizing center. It is found in the centrosome. It localises to the centriole. Its function is as follows. Plays an important role in cell division and centrosome function by participating in centriole duplication. Inhibits microtubule nucleation from the centrosome. Involved in the regulation of slow processive growth of centriolar microtubules. Acts as microtubule plus-end tracking protein that stabilizes centriolar microtubules and inhibits microtubule polymerization and extension from the distal ends of centrioles. Required for centriole elongation and for STIL-mediated centriole amplification. Required for the recruitment of CEP295 to the proximal end of new-born centrioles at the centriolar microtubule wall during early S phase in a PLK4-dependent manner. May be involved in the control of centriolar-microtubule growth by acting as a regulator of tubulin release. In Pan troglodytes (Chimpanzee), this protein is Centrosomal P4.1-associated protein (CPAP).